An 839-amino-acid polypeptide reads, in one-letter code: MFSAGHKIKGTVVLMPKNELEVNPDGSAVDNLNAFLGRSVSLQLISATKADAHGKGKVGKDTFLEGINTSLPTLGAGESAFNIHFEWDGSMGIPGAFYIKNYMQVEFFLKSLTLEAISNQGTIRFVCNSWVYNTKLYKSVRIFFANHTYVPSETPAPLVSYREEELKSLRGNGTGERKEYDRIYDYDVYNDLGNPDKSEKLARPVLGGSSTFPYPRRGRTGRGPTVTDPNTEKQGEVFYVPRDENLGHLKSKDALEIGTKSLSQIVQPAFESAFDLKSTPIEFHSFQDVHDLYEGGIKLPRDVISTIIPLPVIKELYRTDGQHILKFPQPHVVQVSQSAWMTDEEFAREMIAGVNPCVIRGLEEFPPKSNLDPAIYGDQSSKITADSLDLDGYTMDEALGSRRLFMLDYHDIFMPYVRQINQLNSAKTYATRTILFLREDGTLKPVAIELSLPHSAGDLSAAVSQVVLPAKEGVESTIWLLAKAYVIVNDSCYHQLMSHWLNTHAAMEPFVIATHRHLSVLHPIYKLLTPHYRNNMNINALARQSLINANGIIETTFLPSKYSVEMSSAVYKNWVFTDQALPADLIKRGVAIKDPSTPHGVRLLIEDYPYAADGLEIWAAIKTWVQEYVPLYYARDDDVKNDSELQHWWKEAVEKGHGDLKDKPWWPKLQTLEDLVEVCLIIIWIASALHAAVNFGQYPYGGLIMNRPTASRRLLPEKGTPEYEEMINNHEKAYLRTITSKLPTLISLSVIEILSTHASDEVYLGQRDNPHWTSDSKALQAFQKFGNKLKEIEEKLVRRNNDPSLQGNRLGPVQLPYTLLYPSSEEGLTFRGIPNSISI.

Residues 16 to 145 form the PLAT domain; it reads PKNELEVNPD…LYKSVRIFFA (130 aa). Residues 148–839 form the Lipoxygenase domain; that stretch reads TYVPSETPAP…FRGIPNSISI (692 aa). The disordered stretch occupies residues 212-234; it reads FPYPRRGRTGRGPTVTDPNTEKQ. The Fe cation site is built by histidine 499, histidine 504, histidine 690, asparagine 694, and isoleucine 839.

This sequence belongs to the lipoxygenase family. In terms of assembly, monomer. Fe cation serves as cofactor.

The protein resides in the cytoplasm. The enzyme catalyses (9Z,12Z)-octadecadienoate + O2 = (13S)-hydroperoxy-(9Z,11E)-octadecadienoate. The catalysed reaction is (9Z,12Z,15Z)-octadecatrienoate + O2 = (13S)-hydroperoxy-(9Z,11E,15Z)-octadecatrienoate. It catalyses the reaction (4Z,7Z,10Z,13Z,16Z,19Z)-docosahexaenoate + O2 = (17S)-hydroperoxy-(4Z,7Z,10Z,13Z,15E,19Z)-docosahexaenoate. It carries out the reaction (4Z,7Z,10Z,13Z,16Z)-docosapentaenoate + O2 = (17S)-hydroperoxy-(4Z,7Z,10Z,13Z,15E)-docosapentaenoate. The enzyme catalyses (7Z,10Z,13Z,16Z,19Z)-docosapentaenoate + O2 = 17-hydroperoxy-(7Z,10Z,13Z,15E,19Z)-docosapentaenoate. It functions in the pathway lipid metabolism; oxylipin biosynthesis. In terms of biological role, plant lipoxygenase may be involved in a number of diverse aspects of plant physiology including growth and development, pest resistance, and senescence or responses to wounding. With linoleate as substrate, L-1 shows a preference for carbon 13 as the site for hydroperoxidation (in contrast to L-2 and L-3, which utilize either carbon 9 or 13). At pH above 8.5, only (9Z,11E,13S)-13-hydroperoxyoctadeca-9,11-dienoate is produced, but as the pH decreases, the proportion of (9S)-hydroperoxide increases linearly until at pH 6.0 it represents about 25 % of the products. The polypeptide is Seed linoleate 13S-lipoxygenase-1 (LOX1.1) (Glycine max (Soybean)).